The chain runs to 309 residues: Homoserine kinase (309 aa).

Residue 91-101 (PIGSGLGSSAC) coordinates ATP.

This sequence belongs to the GHMP kinase family. Homoserine kinase subfamily.

It is found in the cytoplasm. It carries out the reaction L-homoserine + ATP = O-phospho-L-homoserine + ADP + H(+). It participates in amino-acid biosynthesis; L-threonine biosynthesis; L-threonine from L-aspartate: step 4/5. Its function is as follows. Catalyzes the ATP-dependent phosphorylation of L-homoserine to L-homoserine phosphate. The sequence is that of Homoserine kinase from Escherichia fergusonii (strain ATCC 35469 / DSM 13698 / CCUG 18766 / IAM 14443 / JCM 21226 / LMG 7866 / NBRC 102419 / NCTC 12128 / CDC 0568-73).